The sequence spans 382 residues: Proton extrusion protein PxcA (382 aa).

The next 4 membrane-spanning stretches (helical) occupy residues V162–I182, A257–M277, I305–L325, and F340–I360.

This sequence belongs to the CemA family.

It is found in the cell inner membrane. In terms of biological role, required for H(+) efflux immediately after light irradiation to form a rapid H(+) concentration gradient across the thylakoid membranes. Together with PxcL, contributes to transient H(+) uptake following dark to light transition. This chain is Proton extrusion protein PxcA, found in Synechococcus sp. (strain CC9605).